A 464-amino-acid polypeptide reads, in one-letter code: Argininosuccinate lyase (464 aa).

It belongs to the lyase 1 family. Argininosuccinate lyase subfamily.

The protein resides in the cytoplasm. The catalysed reaction is 2-(N(omega)-L-arginino)succinate = fumarate + L-arginine. It participates in amino-acid biosynthesis; L-arginine biosynthesis; L-arginine from L-ornithine and carbamoyl phosphate: step 3/3. Strongly inhibited by L-arginine. Inhibitory effects are lowered at pH 7.0 compared to those at pH 8.0. At 37 degrees Celsius and pH 7.5, activity decreases to 73% and 31% in the presence of 1 mM and 10 mM arginine, respectively. Activity also decreases to 84%, 93%, 82% and 85% in the presence of 10 mM sodium citrate, citrulline, asparatate and glutamate, respectively. Activity decreases to 96% in presence of 1 mM L-lysine. In terms of biological role, catalyzes the last step of arginine biosynthesis, the conversion of argininosuccinate into L-arginine and fumarate. The chain is Argininosuccinate lyase from Arthrospira platensis (strain NIES-39 / UTEX 3086 / IAM M-135) (Spirulina platensis).